A 413-amino-acid polypeptide reads, in one-letter code: Transforming growth factor beta-2 proprotein (413 aa).

A signal peptide spans 1–19 (MHYYVLFTFLTLDLAPVAL). N-linked (GlcNAc...) asparagine glycans are attached at residues Asn-72, Asn-140, and Asn-241. Intrachain disulfides connect Cys-308/Cys-317, Cys-316/Cys-379, Cys-345/Cys-410, and Cys-349/Cys-412.

This sequence belongs to the TGF-beta family. In terms of assembly, interacts with Transforming growth factor beta-2 (TGF-beta-2) chain; interaction is non-covalent and maintains (TGF-beta-2) in a latent state. Homodimer; disulfide-linked. Interacts with TGF-beta receptors (tgfbr1 and tgfbr2), leading to signal transduction. Post-translationally, the precursor proprotein is cleaved in the Golgi apparatus to form Transforming growth factor beta-2 (TGF-beta-2) and Latency-associated peptide (LAP) chains, which remain non-covalently linked, rendering TGF-beta-2 inactive.

The protein localises to the secreted. Its subcellular location is the extracellular space. It localises to the extracellular matrix. Its function is as follows. Precursor of the Latency-associated peptide (LAP) and Transforming growth factor beta-2 (TGF-beta-2) chains, which constitute the regulatory and active subunit of TGF-beta-2, respectively. In terms of biological role, required to maintain the Transforming growth factor beta-2 (TGF-beta-2) chain in a latent state during storage in extracellular matrix. Associates non-covalently with TGF-beta-2 and regulates its activation via interaction with 'milieu molecules', such as ltbp1 and lrrc32/garp, that control activation of TGF-beta-2. Multifunctional protein that regulates various processes such as angiogenesis and heart development. Activation into mature form follows different steps: following cleavage of the proprotein in the Golgi apparatus, Latency-associated peptide (LAP) and Transforming growth factor beta-2 (TGF-beta-2) chains remain non-covalently linked rendering TGF-beta-2 inactive during storage in extracellular matrix. At the same time, LAP chain interacts with 'milieu molecules', such as ltbp1 and lrrc32/garp, that control activation of TGF-beta-2 and maintain it in a latent state during storage in extracellular milieus. Once activated following release of LAP, TGF-beta-2 acts by binding to TGF-beta receptors (tgfbr1 and tgfbr2), which transduce signal. The sequence is that of Transforming growth factor beta-2 proprotein (tgfb2) from Xenopus laevis (African clawed frog).